A 541-amino-acid polypeptide reads, in one-letter code: Peptide chain release factor 3 (541 aa).

A tr-type G domain is found at Glu14 to Gly283. GTP contacts are provided by residues Ser23–Thr30, Asp91–His95, and Asn145–Asp148.

The protein belongs to the TRAFAC class translation factor GTPase superfamily. Classic translation factor GTPase family. PrfC subfamily.

The protein resides in the cytoplasm. Its function is as follows. Increases the formation of ribosomal termination complexes and stimulates activities of RF-1 and RF-2. It binds guanine nucleotides and has strong preference for UGA stop codons. It may interact directly with the ribosome. The stimulation of RF-1 and RF-2 is significantly reduced by GTP and GDP, but not by GMP. This Acaryochloris marina (strain MBIC 11017) protein is Peptide chain release factor 3.